The following is a 606-amino-acid chain: Large subunit GTPase 1 homolog (606 aa).

Residues 1 to 21 (MGKKNKGGAPNLGRQLIKDRF) form a disordered region. Residues 165–395 (WRQLWRVVER…LCDCPGLVMP (231 aa)) enclose the CP-type G domain. Residue 213–216 (NKSD) participates in GTP binding. A phosphoserine mark is found at Ser276 and Ser279. Residues 344-351 (GYPNVGKS) and 388-391 (DCPG) each bind GTP. Positions 574-606 (LVAGNDPAAKPWRHVKKERREKLRKKFSHLDEH) are disordered. The segment covering 584–600 (PWRHVKKERREKLRKKF) has biased composition (basic residues).

It belongs to the TRAFAC class YlqF/YawG GTPase family. LSG1 subfamily. In terms of tissue distribution, expressed in larval serotonergic neurons.

It localises to the cytoplasm. In terms of biological role, GTPase required for the nuclear export of the 60S ribosomal subunit. Probably acts by mediating the release of Nmd3 from the 60S ribosomal subunit after export into the cytoplasm. Regulator of body size; acts in serotonergic neurons to regulate insulin signaling and thus exerts global growth control. This chain is Large subunit GTPase 1 homolog (Ns3), found in Drosophila melanogaster (Fruit fly).